A 253-amino-acid chain; its full sequence is 5'-nucleotidase SurE (253 aa).

A divalent metal cation contacts are provided by Asp8, Asp9, Ser40, and Asn92.

Belongs to the SurE nucleotidase family. The cofactor is a divalent metal cation.

It localises to the cytoplasm. It carries out the reaction a ribonucleoside 5'-phosphate + H2O = a ribonucleoside + phosphate. In terms of biological role, nucleotidase that shows phosphatase activity on nucleoside 5'-monophosphates. The chain is 5'-nucleotidase SurE from Hyphomonas neptunium (strain ATCC 15444).